A 318-amino-acid polypeptide reads, in one-letter code: 4-hydroxy-3-methylbut-2-enyl diphosphate reductase (318 aa).

Position 12 (Cys-12) interacts with [4Fe-4S] cluster. (2E)-4-hydroxy-3-methylbut-2-enyl diphosphate is bound by residues His-41 and His-74. Positions 41 and 74 each coordinate dimethylallyl diphosphate. Residues His-41 and His-74 each contribute to the isopentenyl diphosphate site. [4Fe-4S] cluster is bound at residue Cys-96. Position 124 (His-124) interacts with (2E)-4-hydroxy-3-methylbut-2-enyl diphosphate. Residue His-124 coordinates dimethylallyl diphosphate. His-124 lines the isopentenyl diphosphate pocket. Catalysis depends on Glu-126, which acts as the Proton donor. (2E)-4-hydroxy-3-methylbut-2-enyl diphosphate is bound at residue Thr-167. A [4Fe-4S] cluster-binding site is contributed by Cys-197. Residues Ser-225, Ser-226, Asn-227, and Ser-269 each coordinate (2E)-4-hydroxy-3-methylbut-2-enyl diphosphate. Residues Ser-225, Ser-226, Asn-227, and Ser-269 each contribute to the dimethylallyl diphosphate site. Isopentenyl diphosphate-binding residues include Ser-225, Ser-226, Asn-227, and Ser-269.

It belongs to the IspH family. It depends on [4Fe-4S] cluster as a cofactor.

It carries out the reaction isopentenyl diphosphate + 2 oxidized [2Fe-2S]-[ferredoxin] + H2O = (2E)-4-hydroxy-3-methylbut-2-enyl diphosphate + 2 reduced [2Fe-2S]-[ferredoxin] + 2 H(+). The catalysed reaction is dimethylallyl diphosphate + 2 oxidized [2Fe-2S]-[ferredoxin] + H2O = (2E)-4-hydroxy-3-methylbut-2-enyl diphosphate + 2 reduced [2Fe-2S]-[ferredoxin] + 2 H(+). Its pathway is isoprenoid biosynthesis; dimethylallyl diphosphate biosynthesis; dimethylallyl diphosphate from (2E)-4-hydroxy-3-methylbutenyl diphosphate: step 1/1. The protein operates within isoprenoid biosynthesis; isopentenyl diphosphate biosynthesis via DXP pathway; isopentenyl diphosphate from 1-deoxy-D-xylulose 5-phosphate: step 6/6. Functionally, catalyzes the conversion of 1-hydroxy-2-methyl-2-(E)-butenyl 4-diphosphate (HMBPP) into a mixture of isopentenyl diphosphate (IPP) and dimethylallyl diphosphate (DMAPP). Acts in the terminal step of the DOXP/MEP pathway for isoprenoid precursor biosynthesis. This is 4-hydroxy-3-methylbut-2-enyl diphosphate reductase from Francisella tularensis subsp. mediasiatica (strain FSC147).